The sequence spans 675 residues: Methionine--tRNA ligase (675 aa).

The 'HIGH' region motif lies at 15–25 (PYANGPIHLGH). Residues Cys-146, Cys-149, Cys-159, and Cys-162 each contribute to the Zn(2+) site. The short motif at 332-336 (KMSKS) is the 'KMSKS' region element. Lys-335 provides a ligand contact to ATP. One can recognise a tRNA-binding domain in the interval 574–675 (DFAKIDLRVA…AGAKPGMRVK (102 aa)).

This sequence belongs to the class-I aminoacyl-tRNA synthetase family. MetG type 1 subfamily. Homodimer. The cofactor is Zn(2+).

The protein localises to the cytoplasm. The enzyme catalyses tRNA(Met) + L-methionine + ATP = L-methionyl-tRNA(Met) + AMP + diphosphate. Functionally, is required not only for elongation of protein synthesis but also for the initiation of all mRNA translation through initiator tRNA(fMet) aminoacylation. The chain is Methionine--tRNA ligase from Shewanella amazonensis (strain ATCC BAA-1098 / SB2B).